We begin with the raw amino-acid sequence, 686 residues long: XK-related protein 5 (686 aa).

5 helical membrane passes run 33–53, 205–225, 239–259, 265–285, and 297–317; these read LLWG…QALS, HFWV…WLVA, LFNL…WDSP, VTFY…ATDF, and IAGV…YYSL. Disordered stretches follow at residues 340-362, 444-470, and 490-589; these read DKTE…ESSG, LQRK…NSSA, and FASD…VGLA. Polar residues-rich tracts occupy residues 455–470 and 490–509; these read LPSS…NSSA and FASD…TQGE. Positions 523-536 are enriched in gly residues; the sequence is QGKGTGGQQRGGEG. The span at 550 to 567 shows a compositional bias: polar residues; the sequence is VATSSQQEGSPATLQTAH.

It belongs to the XK family.

Its subcellular location is the cell membrane. This chain is XK-related protein 5, found in Pan troglodytes (Chimpanzee).